A 156-amino-acid polypeptide reads, in one-letter code: Small ribosomal subunit protein uS7 (156 aa).

The protein belongs to the universal ribosomal protein uS7 family. In terms of assembly, part of the 30S ribosomal subunit. Contacts proteins S9 and S11.

Functionally, one of the primary rRNA binding proteins, it binds directly to 16S rRNA where it nucleates assembly of the head domain of the 30S subunit. Is located at the subunit interface close to the decoding center, probably blocks exit of the E-site tRNA. This is Small ribosomal subunit protein uS7 from Streptomyces avermitilis (strain ATCC 31267 / DSM 46492 / JCM 5070 / NBRC 14893 / NCIMB 12804 / NRRL 8165 / MA-4680).